Reading from the N-terminus, the 315-residue chain is Small ribosomal subunit protein uS2 (315 aa).

A disordered region spans residues 241–315 (AQHGEERRPG…QPAPGSDANR (75 aa)). Residues 243 to 288 (HGEERRPGEEDRDAASERGQKDRRDRRDRRGGGRDRERREPREDRA) show a composition bias toward basic and acidic residues.

This sequence belongs to the universal ribosomal protein uS2 family.

This chain is Small ribosomal subunit protein uS2, found in Anaeromyxobacter sp. (strain Fw109-5).